A 1840-amino-acid polypeptide reads, in one-letter code: Collagen alpha-1(V) chain (1840 aa).

Residues 1 to 30 (MDVHTRWKAPRPGAPLLSSPLLLLLLLLWA) form the signal peptide. The Laminin G-like domain maps to 72 to 244 (DVAYRVSKDA…DYCEHYSPDC (173 aa)). The tract at residues 231–445 (RAAYDYCEHY…MPANQDTIYE (215 aa)) is nonhelical region. A sulfotyrosine mark is found at Tyr-234, Tyr-236, Tyr-240, Tyr-262, Tyr-263, Tyr-336, Tyr-338, and Tyr-344. Disordered stretches follow at residues 241-547 (SPDC…QESQ) and 561-1576 (GPAG…EVIQ). The segment covering 258-268 (NPDEYYPEGEG) has biased composition (acidic residues). Low complexity-rich tracts occupy residues 335 to 352 (DYDY…PYED), 375 to 387 (PTST…SSNP), and 462 to 471 (IIEPGMLIEG). The interrupted collagenous region stretch occupies residues 446–560 (GIGGPRGEKG…ILQQARLALR (115 aa)). Residues 472–487 (PPGPEGPAGLPGPPGT) show a composition bias toward pro residues. Composition is skewed to low complexity over residues 508–525 (LPGA…LMLP) and 561–572 (GPAGPMGLTGRP). A triple-helical region region spans residues 561–1572 (GPAGPMGLTG…GLPGPPGPPG (1012 aa)). A 4-hydroxyproline mark is found at Pro-572, Pro-578, and Pro-623. Lys-629 bears the 5-hydroxylysine mark. Pro-641 carries the post-translational modification 4-hydroxyproline. Lys-644 bears the 5-hydroxylysine mark. 5 positions are modified to 4-hydroxyproline: Pro-650, Pro-656, Pro-659, Pro-677, and Pro-680. The span at 673–688 (PRGLPGEPGPRGLLGP) shows a compositional bias: low complexity. 3-hydroxyproline occurs at positions 682 and 688. Residues 689 to 698 (KGPPGPPGPP) show a composition bias toward pro residues. 4-hydroxyproline occurs at positions 692, 698, and 707. Lys-710 is modified (5-hydroxylysine). 4-hydroxyproline occurs at positions 719, 722, 728, and 734. The segment covering 724–743 (QQGNPGAQGLPGPQGAIGPP) has biased composition (low complexity). Lys-746 carries the 5-hydroxylysine modification. The span at 749-758 (LGKPGLPGMP) shows a compositional bias: low complexity. Pro-752, Pro-758, Pro-764, Pro-767, and Pro-773 each carry 4-hydroxyproline. The residue at position 776 (Lys-776) is a 5-hydroxylysine. A 4-hydroxyproline mark is found at Pro-782 and Pro-791. Residues Lys-797, Lys-806, Lys-809, and Lys-812 each carry the 5-hydroxylysine modification. Residue Pro-818 is modified to 4-hydroxyproline. Lys-821 is subject to 5-hydroxylysine. At Pro-836 the chain carries 4-hydroxyproline. A compositionally biased stretch (basic and acidic residues) spans 839–848 (RGEDGPEGPK). 2 positions are modified to 5-hydroxylysine: Lys-848 and Lys-866. 4-hydroxyproline occurs at positions 872, 875, and 878. Residue Lys-884 is modified to 5-hydroxylysine. 4-hydroxyproline occurs at positions 890 and 893. Residue Lys-899 is modified to 5-hydroxylysine. Pro-905 and Pro-908 each carry 4-hydroxyproline. A compositionally biased stretch (low complexity) spans 910-919 (PRGQRGPTGP). A 4-hydroxyproline mark is found at Pro-932 and Pro-947. Low complexity-rich tracts occupy residues 973-992 (KDGL…QGKT) and 1001-1013 (VGPQ…TGPM). Residues Pro-1019, Pro-1022, Pro-1025, and Pro-1031 each carry the 4-hydroxyproline modification. Residues 1090-1106 (SPGERGPAGAAGPIGIP) show a composition bias toward low complexity. The span at 1108–1117 (RPGPQGPPGP) shows a compositional bias: pro residues. 4-hydroxyproline is present on residues Pro-1223 and Pro-1226. The segment covering 1261–1270 (PSGAPGADGP) has biased composition (low complexity). Residues 1296–1305 (GLPGEGGPLG) are compositionally biased toward gly residues. Composition is skewed to pro residues over residues 1382–1400 (TGEP…PGPA) and 1456–1471 (SPGP…PPGL). Residues Pro-1469 and Pro-1472 each carry the 4-hydroxyproline modification. Low complexity predominate over residues 1487 to 1496 (PGLIGLIGPP). Pro residues predominate over residues 1528-1543 (PLGPPGPPGLPGPPGP). Low complexity predominate over residues 1544 to 1556 (KGAKGSSGPTGPK). Positions 1573–1607 (EVIQPLPIQASRTRRNIDASQLLDDGAGESYVDYA) are nonhelical region. Tyr-1603 and Tyr-1606 each carry sulfotyrosine. The region spanning 1611 to 1839 (EEIFGSLNSL…GFEVGPACFL (229 aa)) is the Fibrillar collagen NC1 domain.

Belongs to the fibrillar collagen family. As to quaternary structure, trimers of two alpha 1(V) and one alpha 2(V) chains in most tissues and trimers of one alpha 1(V), one alpha 2(V), and one alpha 3(V) chains in placenta. Interacts with CSPG4. Prolines at the third position of the tripeptide repeating unit (G-X-Y) are hydroxylated in some or all of the chains. In terms of processing, sulfated on 40% of tyrosines. Post-translationally, hydroxylation on proline residues within the sequence motif, GXPG, is most likely to be 4-hydroxy as this fits the requirement for 4-hydroxylation in vertebrates. In terms of tissue distribution, a high molecular weight form was detected in Schwann cells and peripheral nerve. A lower, probably processed form, is detected in all other tissues tested (at protein level).

It is found in the secreted. Its subcellular location is the extracellular space. The protein resides in the extracellular matrix. Functionally, type V collagen is a member of group I collagen (fibrillar forming collagen). It is a minor connective tissue component of nearly ubiquitous distribution. Type V collagen binds to DNA, heparan sulfate, thrombospondin, heparin, and insulin. The chain is Collagen alpha-1(V) chain (Col5a1) from Rattus norvegicus (Rat).